A 167-amino-acid chain; its full sequence is G/U mismatch-specific DNA glycosylase (167 aa).

Belongs to the uracil-DNA glycosylase (UDG) superfamily. TDG/mug family. In terms of assembly, binds DNA as a monomer.

The protein resides in the cytoplasm. It carries out the reaction Specifically hydrolyzes mismatched double-stranded DNA and polynucleotides, releasing free uracil.. In terms of biological role, excises ethenocytosine and uracil, which can arise by alkylation or deamination of cytosine, respectively, from the corresponding mispairs with guanine in ds-DNA. It is capable of hydrolyzing the carbon-nitrogen bond between the sugar-phosphate backbone of the DNA and the mispaired base. The complementary strand guanine functions in substrate recognition. Required for DNA damage lesion repair in stationary-phase cells. This Pectobacterium carotovorum subsp. carotovorum (strain PC1) protein is G/U mismatch-specific DNA glycosylase.